The following is a 68-amino-acid chain: DNA-directed RNA polymerase subunit omega (68 aa).

It belongs to the RNA polymerase subunit omega family. As to quaternary structure, the RNAP catalytic core consists of 2 alpha, 1 beta, 1 beta' and 1 omega subunit. When a sigma factor is associated with the core the holoenzyme is formed, which can initiate transcription.

It catalyses the reaction RNA(n) + a ribonucleoside 5'-triphosphate = RNA(n+1) + diphosphate. Its function is as follows. Promotes RNA polymerase assembly. Latches the N- and C-terminal regions of the beta' subunit thereby facilitating its interaction with the beta and alpha subunits. The polypeptide is DNA-directed RNA polymerase subunit omega (Neisseria meningitidis serogroup C (strain 053442)).